Reading from the N-terminus, the 60-residue chain is Large ribosomal subunit protein bL32 (60 aa).

Over residues 1–23 the composition is skewed to basic residues; the sequence is MAKHPVPKKKTSKSKRDMRRSHH. The interval 1-26 is disordered; it reads MAKHPVPKKKTSKSKRDMRRSHHALT.

Belongs to the bacterial ribosomal protein bL32 family.

The sequence is that of Large ribosomal subunit protein bL32 from Deinococcus deserti (strain DSM 17065 / CIP 109153 / LMG 22923 / VCD115).